We begin with the raw amino-acid sequence, 338 residues long: Ketol-acid reductoisomerase (NADP(+)) (338 aa).

Positions 1-181 (MKVFYDKDAD…GGGRAGIIET (181 aa)) constitute a KARI N-terminal Rossmann domain. Residues 24–27 (YGSQ), R47, and S52 contribute to the NADP(+) site. H107 is an active-site residue. Position 133 (G133) interacts with NADP(+). The KARI C-terminal knotted domain maps to 182 to 327 (NFREETETDL…SKLRAMMPWI (146 aa)). Mg(2+) is bound by residues D190, E194, E226, and E230. S251 is a substrate binding site.

Belongs to the ketol-acid reductoisomerase family. Mg(2+) is required as a cofactor.

It catalyses the reaction (2R)-2,3-dihydroxy-3-methylbutanoate + NADP(+) = (2S)-2-acetolactate + NADPH + H(+). The enzyme catalyses (2R,3R)-2,3-dihydroxy-3-methylpentanoate + NADP(+) = (S)-2-ethyl-2-hydroxy-3-oxobutanoate + NADPH + H(+). Its pathway is amino-acid biosynthesis; L-isoleucine biosynthesis; L-isoleucine from 2-oxobutanoate: step 2/4. It participates in amino-acid biosynthesis; L-valine biosynthesis; L-valine from pyruvate: step 2/4. Its function is as follows. Involved in the biosynthesis of branched-chain amino acids (BCAA). Catalyzes an alkyl-migration followed by a ketol-acid reduction of (S)-2-acetolactate (S2AL) to yield (R)-2,3-dihydroxy-isovalerate. In the isomerase reaction, S2AL is rearranged via a Mg-dependent methyl migration to produce 3-hydroxy-3-methyl-2-ketobutyrate (HMKB). In the reductase reaction, this 2-ketoacid undergoes a metal-dependent reduction by NADPH to yield (R)-2,3-dihydroxy-isovalerate. The sequence is that of Ketol-acid reductoisomerase (NADP(+)) from Paraburkholderia xenovorans (strain LB400).